Reading from the N-terminus, the 526-residue chain is Fatty-acid amide hydrolase 2-B (526 aa).

Residues 12 to 32 traverse the membrane as a helical segment; sequence CLLVLVSGLFLALFRLLSPGT. Residues K128 and S203 each act as charge relay system in the active site. S227 serves as the catalytic Acyl-ester intermediate.

It belongs to the amidase family.

Its subcellular location is the membrane. The catalysed reaction is N-(5Z,8Z,11Z,14Z-eicosatetraenoyl)-ethanolamine + H2O = ethanolamine + (5Z,8Z,11Z,14Z)-eicosatetraenoate. The enzyme catalyses (9Z)-octadecenamide + H2O = (9Z)-octadecenoate + NH4(+). The polypeptide is Fatty-acid amide hydrolase 2-B (faah2b) (Danio rerio (Zebrafish)).